A 344-amino-acid polypeptide reads, in one-letter code: Dihydroorotase (344 aa).

2 residues coordinate Zn(2+): His-14 and His-16. Substrate is bound by residues 16–18 (HLR) and Asn-42. Zn(2+) contacts are provided by Lys-100, His-137, and His-175. The residue at position 100 (Lys-100) is an N6-carboxylysine. Residue His-137 participates in substrate binding. A substrate-binding site is contributed by Leu-220. Residue Asp-248 coordinates Zn(2+). Asp-248 is an active-site residue. The substrate site is built by His-252 and Ala-264.

It belongs to the metallo-dependent hydrolases superfamily. DHOase family. Class II DHOase subfamily. Homodimer. The cofactor is Zn(2+).

The enzyme catalyses (S)-dihydroorotate + H2O = N-carbamoyl-L-aspartate + H(+). The protein operates within pyrimidine metabolism; UMP biosynthesis via de novo pathway; (S)-dihydroorotate from bicarbonate: step 3/3. Its function is as follows. Catalyzes the reversible cyclization of carbamoyl aspartate to dihydroorotate. This chain is Dihydroorotase, found in Roseobacter denitrificans (strain ATCC 33942 / OCh 114) (Erythrobacter sp. (strain OCh 114)).